The primary structure comprises 1035 residues: MSYFRNRDIDIERNSMNRSVQERKCRYSIRKLSVGAVSMIVGAVVFGTSPVLAQEGASEQPLANETQLSGESSTLTDTEKSQPSSETELSGNKQEQERKDKQEEKIPRDYYARDLENVETVIEKEDVETNASNGQRVDLSSELDKLKKLENATVHMEFKPDAKAPAFYNLFSVSSATKKDEYFTMAVYNNTATLEGRGSDGKQFYNNYNDAPLKVKPGQWNSVTFTVEKPTAELPKGRVRLYVNGVLSRTSLRSGNFIKDMPDVTHVQIGATKRANNTVWGSNLQIRNLTVYNRALTPEEVQKRSQLFKRSDLEKKLPEGAALTEKTDIFESGRNGKPNKDGIKSYRIPALLKTDKGTLIAGADERRLHSSDWGDIGMVIRRSEDNGKTWGDRVTITNLRDNPKASDPSIGSPVNIDMVLVQDPETKRIFSIYDMFPEGKGIFGMSSQKEEAYKKIDGKTYQILYREGEKGAYTIRENGTVYTPDGKATDYRVVVDPVKPAYSDKGDLYKGNQLLGNIYFTTNKTSPFRIAKDSYLWMSYSDDDGKTWSAPQDITPMVKADWMKFLGVGPGTGIVLRNGPHKGRILIPVYTTNNVSHLNGSQSSRIIYSDDHGKTWHAGEAVNDNRQVDGQKIHSSTMNNRRAQNTESTVVQLNNGDVKLFMRGLTGDLQVATSKDGGVTWEKDIKRYPQVKDVYVQMSAIHTMHEGKEYIILSNAGGPKRENGMVHLARVEENGELTWLKHNPIQKGEFAYNSLQELGNGEYGILYEHTEKGQNAYTLSFRKFNWDFLSKDLISPTEAKVKRTREMGKGVIGLEFDSEVLVNKAPTLQLANGKTARFMTQYDTKTLLFTVDSEDMGQKVTGLAEGAIESMHNLPVSVAGTKLSNGMNGSEAAVHEVPEYTGPLGTSGEEPAPTVEKPEYTGPLGTSGEEPAPTVEKPEYTGPLGTAGEEAAPTVEKPEFTGGVNGTEPAVHEIAEYKGSDSLVTLTTKEDYTYKAPLAQQALPETGNKESDLLASLGLTAFFLGLFTLGKKREQ.

An N-terminal signal peptide occupies residues 1-53 (MSYFRNRDIDIERNSMNRSVQERKCRYSIRKLSVGAVSMIVGAVVFGTSPVLA). The interval 57-112 (ASEQPLANETQLSGESSTLTDTEKSQPSSETELSGNKQEQERKDKQEEKIPRDYYA) is disordered. Polar residues predominate over residues 61-92 (PLANETQLSGESSTLTDTEKSQPSSETELSGN). Basic and acidic residues predominate over residues 94–112 (QEQERKDKQEEKIPRDYYA). Arg-347 lines the substrate pocket. The active-site Proton acceptor is Asp-372. BNR repeat units follow at residues 381–392 (RRSEDNGKTWGD), 539–550 (SYSDDDGKTWSA), and 607–618 (IYSDDHGKTWHA). Residue Glu-647 is part of the active site. Arg-663 contributes to the substrate binding site. One copy of the BNR 4 repeat lies at 672-683 (ATSKDGGVTWEK). Residues 902–951 (GPLGTSGEEPAPTVEKPEYTGPLGTSGEEPAPTVEKPEYTGPLGTAGEEA) form a disordered region. The short motif at 1003 to 1007 (LPETG) is the LPXTG sorting signal element. Thr-1006 bears the Pentaglycyl murein peptidoglycan amidated threonine mark. A propeptide spans 1007–1035 (GNKESDLLASLGLTAFFLGLFTLGKKREQ) (removed by sortase).

Belongs to the glycosyl hydrolase 33 family.

The protein resides in the secreted. It is found in the cell wall. The enzyme catalyses Hydrolysis of alpha-(2-&gt;3)-, alpha-(2-&gt;6)-, alpha-(2-&gt;8)- glycosidic linkages of terminal sialic acid residues in oligosaccharides, glycoproteins, glycolipids, colominic acid and synthetic substrates.. The polypeptide is Sialidase A (nanA) (Streptococcus pneumoniae).